A 223-amino-acid polypeptide reads, in one-letter code: UPF0758 protein Cvib_1178 (223 aa).

An MPN domain is found at 100–222 (KIQGARDVYE…WYSFRENNQL (123 aa)). Positions 171, 173, and 184 each coordinate Zn(2+). The JAMM motif motif lies at 171-184 (HNHPSGDTEPSNAD).

This sequence belongs to the UPF0758 family.

In Chlorobium phaeovibrioides (strain DSM 265 / 1930) (Prosthecochloris vibrioformis (strain DSM 265)), this protein is UPF0758 protein Cvib_1178.